Here is a 126-residue protein sequence, read N- to C-terminus: MAVPSELKYSKEHEWVKVEGNTVTIGITEYAQGELGDIVFVELPEVDDEINEGDTFGSVESVKTVSELYAPVSGKVLESNEELEDSPEFVNESPYEKAWMVKVELSDESQLEELMSAEQYSEMIGE.

Residues 22 to 104 (TVTIGITEYA…YEKAWMVKVE (83 aa)) enclose the Lipoyl-binding domain. Lys63 bears the N6-lipoyllysine mark.

Belongs to the GcvH family. In terms of assembly, the glycine cleavage system is composed of four proteins: P, T, L and H. It depends on (R)-lipoate as a cofactor.

The glycine cleavage system catalyzes the degradation of glycine. The H protein shuttles the methylamine group of glycine from the P protein to the T protein. Functionally, is also involved in protein lipoylation via its role as an octanoyl/lipoyl carrier protein intermediate. The polypeptide is Glycine cleavage system H protein (Staphylococcus saprophyticus subsp. saprophyticus (strain ATCC 15305 / DSM 20229 / NCIMB 8711 / NCTC 7292 / S-41)).